Consider the following 428-residue polypeptide: Enolase (428 aa).

Q163 is a (2R)-2-phosphoglycerate binding site. E205 (proton donor) is an active-site residue. Mg(2+) contacts are provided by D242, E286, and D313. Residues K338, R367, S368, and K389 each contribute to the (2R)-2-phosphoglycerate site. K338 acts as the Proton acceptor in catalysis.

This sequence belongs to the enolase family. Mg(2+) serves as cofactor.

The protein localises to the cytoplasm. Its subcellular location is the secreted. It localises to the cell surface. The catalysed reaction is (2R)-2-phosphoglycerate = phosphoenolpyruvate + H2O. It functions in the pathway carbohydrate degradation; glycolysis; pyruvate from D-glyceraldehyde 3-phosphate: step 4/5. Functionally, catalyzes the reversible conversion of 2-phosphoglycerate (2-PG) into phosphoenolpyruvate (PEP). It is essential for the degradation of carbohydrates via glycolysis. This Geobacter sulfurreducens (strain ATCC 51573 / DSM 12127 / PCA) protein is Enolase.